Consider the following 247-residue polypeptide: Chymase (247 aa).

Residues 1-19 (MLLLPLPLLLFFLCSRAEA) form the signal peptide. The propeptide at 20–21 (GE) is activation peptide. Residues 22 to 245 (IIGGTECKPH…YRPWINKILQ (224 aa)) enclose the Peptidase S1 domain. Cysteines 51 and 67 form a disulfide. The Charge relay system role is filled by His-66. N-linked (GlcNAc...) asparagine glycans are attached at residues Asn-80 and Asn-103. The active-site Charge relay system is the Asp-110. Disulfide bonds link Cys-144/Cys-209 and Cys-175/Cys-188. Catalysis depends on Ser-203, which acts as the Charge relay system.

The protein belongs to the peptidase S1 family. Granzyme subfamily.

It localises to the secreted. The protein localises to the cytoplasmic granule. It carries out the reaction Preferential cleavage: Phe-|-Xaa &gt; Tyr-|-Xaa &gt; Trp-|-Xaa &gt; Leu-|-Xaa.. In terms of biological role, major secreted protease of mast cells with suspected roles in vasoactive peptide generation, extracellular matrix degradation, and regulation of gland secretion. The chain is Chymase (CMA1) from Macaca fascicularis (Crab-eating macaque).